Consider the following 333-residue polypeptide: NADH-quinone oxidoreductase subunit H (333 aa).

8 helical membrane passes run 15-35 (FFIF…FVTY), 88-108 (FILA…VIPF), 117-137 (IGVG…GVVT), 159-179 (ISYE…AGSL), 191-211 (VWYI…AVAE), 239-259 (WAFF…LITV), 274-296 (IPGA…WFRV), and 313-333 (VLLP…ELFF).

This sequence belongs to the complex I subunit 1 family. NDH-1 is composed of 14 different subunits. Subunits NuoA, H, J, K, L, M, N constitute the membrane sector of the complex.

It localises to the cell membrane. It catalyses the reaction a quinone + NADH + 5 H(+)(in) = a quinol + NAD(+) + 4 H(+)(out). NDH-1 shuttles electrons from NADH, via FMN and iron-sulfur (Fe-S) centers, to quinones in the respiratory chain. The immediate electron acceptor for the enzyme in this species is believed to be ubiquinone. Couples the redox reaction to proton translocation (for every two electrons transferred, four hydrogen ions are translocated across the cytoplasmic membrane), and thus conserves the redox energy in a proton gradient. This subunit may bind ubiquinone. In Bacillus thuringiensis subsp. konkukian (strain 97-27), this protein is NADH-quinone oxidoreductase subunit H.